The chain runs to 349 residues: Diacylglycerol O-acyltransferase 2B (349 aa).

A run of 2 helical transmembrane segments spans residues 44 to 64 and 114 to 134; these read ICLI…ILIM and YIMS…NFAT.

Belongs to the diacylglycerol acyltransferase family.

Its subcellular location is the endoplasmic reticulum membrane. It catalyses the reaction an acyl-CoA + a 1,2-diacyl-sn-glycerol = a triacyl-sn-glycerol + CoA. It functions in the pathway glycerolipid metabolism; triacylglycerol biosynthesis. Catalyzes the terminal and only committed step in triacylglycerol synthesis by using diacylglycerol and fatty acyl CoA as substrates. Required for storage lipid synthesis. The polypeptide is Diacylglycerol O-acyltransferase 2B (DGAT2B) (Umbelopsis ramanniana (Oleaginous fungus)).